Here is a 433-residue protein sequence, read N- to C-terminus: 26S proteasome regulatory subunit 7 (433 aa).

The disordered stretch occupies residues 1–22 (MPDYLGADQRKTKEDEKDDKPI). The segment covering 8 to 22 (DQRKTKEDEKDDKPI) has biased composition (basic and acidic residues). Position 116 is an N6-acetyllysine (K116). Residue 216–223 (GPPGTGKT) participates in ATP binding. Residue K422 is modified to N6-acetyllysine.

It belongs to the AAA ATPase family. As to quaternary structure, component of the 19S proteasome regulatory particle complex. The 26S proteasome consists of a 20S core particle (CP) and two 19S regulatory subunits (RP). The regulatory particle is made of a lid composed of 9 subunits, a base containing 6 ATPases including PSMC2 and few additional components. Interacts with NDC80 and SQSTM1. Interacts with PAAF1. Interacts with TRIM5. Monoubiquitinated by RNF181. Post-translationally, phosphorylated. Dephosphorylated by UBLCP1 which impairs PSMC2 ATPase activity and disrupts 26S proteasome assembly.

It is found in the cytoplasm. Component of the 26S proteasome, a multiprotein complex involved in the ATP-dependent degradation of ubiquitinated proteins. This complex plays a key role in the maintenance of protein homeostasis by removing misfolded or damaged proteins, which could impair cellular functions, and by removing proteins whose functions are no longer required. Therefore, the proteasome participates in numerous cellular processes, including cell cycle progression, apoptosis, or DNA damage repair. PSMC2 belongs to the heterohexameric ring of AAA (ATPases associated with diverse cellular activities) proteins that unfolds ubiquitinated target proteins that are concurrently translocated into a proteolytic chamber and degraded into peptides. The polypeptide is 26S proteasome regulatory subunit 7 (Psmc2) (Rattus norvegicus (Rat)).